The sequence spans 461 residues: Cysteine--tRNA ligase (461 aa).

Residue C30 participates in Zn(2+) binding. The short motif at 32–42 is the 'HIGH' region element; the sequence is PTVYSYAHIGN. Zn(2+) is bound by residues C212, H237, and E241. A 'KMSKS' region motif is present at residues 270–274; it reads KMSKS. Residue K273 coordinates ATP.

It belongs to the class-I aminoacyl-tRNA synthetase family. Monomer. Requires Zn(2+) as cofactor.

It is found in the cytoplasm. It carries out the reaction tRNA(Cys) + L-cysteine + ATP = L-cysteinyl-tRNA(Cys) + AMP + diphosphate. The chain is Cysteine--tRNA ligase from Maricaulis maris (strain MCS10) (Caulobacter maris).